Consider the following 157-residue polypeptide: SsrA-binding protein (157 aa).

This sequence belongs to the SmpB family.

Its subcellular location is the cytoplasm. In terms of biological role, required for rescue of stalled ribosomes mediated by trans-translation. Binds to transfer-messenger RNA (tmRNA), required for stable association of tmRNA with ribosomes. tmRNA and SmpB together mimic tRNA shape, replacing the anticodon stem-loop with SmpB. tmRNA is encoded by the ssrA gene; the 2 termini fold to resemble tRNA(Ala) and it encodes a 'tag peptide', a short internal open reading frame. During trans-translation Ala-aminoacylated tmRNA acts like a tRNA, entering the A-site of stalled ribosomes, displacing the stalled mRNA. The ribosome then switches to translate the ORF on the tmRNA; the nascent peptide is terminated with the 'tag peptide' encoded by the tmRNA and targeted for degradation. The ribosome is freed to recommence translation, which seems to be the essential function of trans-translation. This Chlorobaculum tepidum (strain ATCC 49652 / DSM 12025 / NBRC 103806 / TLS) (Chlorobium tepidum) protein is SsrA-binding protein.